The primary structure comprises 569 residues: WD repeat-containing protein 20 (569 aa).

Ala2 bears the N-acetylalanine mark. WD repeat units lie at residues 94 to 138, 139 to 210, 211 to 252, 253 to 331, 332 to 426, 427 to 523, and 524 to 559; these read RIYK…KETS, KLFN…KSTR, NPLL…FDSV, ELHG…SGSD, EDFQ…NSVP, PPLP…VPLL, and EPLICKKIAHERLTVLIFLEDCIVTACQEGFICTWG. Residues Ser357 and Ser360 each carry the phosphoserine modification. Polar residues-rich tracts occupy residues 405-423 and 431-445; these read NATSPPAGSNGNSVTTPGN and RSNSLPHSAVSNAGS. A disordered region spans residues 405 to 445; sequence NATSPPAGSNGNSVTTPGNSVPPPLPRSNSLPHSAVSNAGS. 3 positions are modified to phosphoserine: Ser432, Ser434, and Ser465. The segment at 450-468 is mediates XPO1-dependent nuclear export of WDR20-USP12 complexes; sequence MDGAIASGVSKFATLSLHD.

Interacts with USP12; promotes translocation of USP12/WDR20 to the plasma membrane. Component of the USP12/WDR20/WDR48 deubiquitinating complex. Interacts with USP46; contributes to the cytoplasmic localization of the USP46/WDR20 complex. Component of the USP12/DMWD/WDR48 deubiquitinating complex.

It localises to the cytoplasm. The protein localises to the nucleus. Functionally, regulator of deubiquitinating complexes. Activates deubiquitinating activity of complexes containing USP12. Anchors at the base of the ubiquitin-contacting loop of USP12 and remotely modulates the catalytic center of the enzyme. Regulates shuttling of the USP12 deubiquitinase complex between the plasma membrane, cytoplasm and nucleus. In Homo sapiens (Human), this protein is WD repeat-containing protein 20 (WDR20).